A 387-amino-acid polypeptide reads, in one-letter code: Dual specificity mitogen-activated protein kinase kinase mek-2 (387 aa).

The segment at 1 to 37 (MSSGKRRNPLGLSLPPTVNEQSESGEATAEEATATVP) is disordered. Residues 16-25 (PTVNEQSESG) are compositionally biased toward polar residues. Over residues 26–35 (EATAEEATAT) the composition is skewed to low complexity. The Protein kinase domain maps to 73–360 (LQTEGELGHG…LKSLTADVFF (288 aa)). ATP is bound by residues 79–87 (LGHGNGGVV) and lysine 102. Aspartate 195 functions as the Proton acceptor in the catalytic mechanism. Phosphoserine is present on residues serine 223 and serine 227.

The protein belongs to the protein kinase superfamily. STE Ser/Thr protein kinase family. MAP kinase kinase subfamily. As to quaternary structure, interacts with ksr-1.

It catalyses the reaction L-seryl-[protein] + ATP = O-phospho-L-seryl-[protein] + ADP + H(+). It carries out the reaction L-threonyl-[protein] + ATP = O-phospho-L-threonyl-[protein] + ADP + H(+). The catalysed reaction is L-tyrosyl-[protein] + ATP = O-phospho-L-tyrosyl-[protein] + ADP + H(+). Activated by tyrosine and threonine phosphorylation catalyzed by MAP kinase kinase kinases. Functions in the let-60 Ras signaling pathway; acts downstream of lin-45 raf kinase, but before the sur-1/mpk-1 gene product in controlling vulval cell differentiation. Required for progression of developing oocytes through the pachytene stage. Plays a role in responses to M.nematophilum-mediated bacterial infection by promoting tail swelling and preventing constipation. Involved in fluid homeostasis. Positively regulates lifespan upstream of mpk-1. The chain is Dual specificity mitogen-activated protein kinase kinase mek-2 (mek-2) from Caenorhabditis elegans.